Reading from the N-terminus, the 4244-residue chain is Tenascin-X (4244 aa).

The signal sequence occupies residues 1–23 (MMPAQYALTSSLVLLVLLSTARA). The tract at residues 27 to 57 (SSRSNVTLPAPRPPPQPGGHTVGAGVGSPSS) is disordered. An N-linked (GlcNAc...) asparagine glycan is attached at asparagine 31. One can recognise an EGF-like 1; incomplete domain in the interval 156-168 (CSCEPGWGGPTCS). Residues 169–189 (DPTDAEIPPSSPPSASGSCPD) are disordered. 18 EGF-like domains span residues 183 to 213 (ASGSCPDDCNDQGRCVRGRCVCFPGYTGPSC), 214 to 244 (GWPSCPGDCQGRGRCVQGVCVCRAGFSGPDC), 245 to 275 (SQRSCPRGCSQRGRCEGGRCVCDPGYTGDDC), 276 to 306 (GMRSCPRGCSQRGRCENGRCVCNPGYTGEDC), 307 to 337 (GVRSCPRGCSQRGRCKDGRCVCDPGYTGEDC), 338 to 368 (GTRSCPWDCGEGGRCVDGRCVCWPGYTGEDC), 369 to 399 (STRTCPRDCRGRGRCEDGECICDTGYSGDDC), 400 to 430 (GVRSCPGDCNQRGRCEDGRCVCWPGYTGTDC), 431 to 461 (GSRACPRDCRGRGRCENGVCVCNAGYSGEDC), 462 to 492 (GVRSCPGDCRGRGRCESGRCMCWPGYTGRDC), 493 to 523 (GTRACPGDCRGRGRCVDGRCVCNPGFTGEDC), 524 to 554 (GSRRCPGDCRGHGLCEDGVCVCDAGYSGEDC), 555 to 585 (STRSCPGGCRGRGQCLDGRCVCEDGYSGEDC), 586 to 616 (GVRQCPNDCSQHGVCQDGVCICWEGYVSEDC), 617 to 647 (SIRTCPSNCHGRGRCEEGRCLCDPGYTGPTC), 648 to 679 (ATRMCPADCRGRGRCVQGVCLCHVGYGGEDCG), 684 to 714 (PASACPGGCGPRELCRAGQCVCVEGFRGPDC), and 715 to 746 (AIQTCPGDCRGRGECHDGSCVCKDGYAGEDCG). 54 disulfide bridges follow: cysteine 187–cysteine 197, cysteine 191–cysteine 202, cysteine 204–cysteine 213, cysteine 218–cysteine 228, cysteine 222–cysteine 233, cysteine 235–cysteine 244, cysteine 249–cysteine 259, cysteine 253–cysteine 264, cysteine 266–cysteine 275, cysteine 280–cysteine 290, cysteine 284–cysteine 295, cysteine 297–cysteine 306, cysteine 311–cysteine 321, cysteine 315–cysteine 326, cysteine 328–cysteine 337, cysteine 342–cysteine 352, cysteine 346–cysteine 357, cysteine 359–cysteine 368, cysteine 373–cysteine 383, cysteine 377–cysteine 388, cysteine 390–cysteine 399, cysteine 404–cysteine 414, cysteine 408–cysteine 419, cysteine 421–cysteine 430, cysteine 435–cysteine 445, cysteine 439–cysteine 450, cysteine 452–cysteine 461, cysteine 466–cysteine 476, cysteine 470–cysteine 481, cysteine 483–cysteine 492, cysteine 497–cysteine 507, cysteine 501–cysteine 512, cysteine 514–cysteine 523, cysteine 528–cysteine 538, cysteine 532–cysteine 543, cysteine 545–cysteine 554, cysteine 559–cysteine 569, cysteine 563–cysteine 574, cysteine 576–cysteine 585, cysteine 590–cysteine 600, cysteine 594–cysteine 605, cysteine 607–cysteine 616, cysteine 621–cysteine 631, cysteine 625–cysteine 636, cysteine 638–cysteine 647, cysteine 652–cysteine 662, cysteine 656–cysteine 667, cysteine 669–cysteine 678, cysteine 688–cysteine 698, cysteine 692–cysteine 703, cysteine 705–cysteine 714, cysteine 719–cysteine 729, cysteine 723–cysteine 734, and cysteine 736–cysteine 745. The tract at residues 926 to 956 (TGSSPLGLLGTTDEPPPSGPSTTQGAQAPLL) is disordered. Fibronectin type-III domains are found at residues 959–1051 (RPQE…IMDK), 1064–1153 (RLGE…PQSD), 1161–1249 (HLGN…APER), 1263–1352 (LLGE…PQED), 1374–1468 (LLGE…TPPA), 1476–1572 (RLGE…TEAS), 1574–1669 (PPLE…RGDA), 1674–1764 (PPRL…ARSA), 1778–1868 (LGEE…REET), and 1883–1971 (HLGE…VPEE). The interval 1340–1372 (PESVVAKTAPQEDVDETPSPTELGTEAPESPEE) is disordered. Positions 1666 to 1668 (RGD) match the Cell attachment site motif. Residues 1752-1777 (PLTADGTTEARSAMDDTGTKRPPKPR) form a disordered region. Positions 1968–1990 (VPEEEKPSEPPTATPEPPIKPRL) are disordered. Residues 1976 to 1987 (EPPTATPEPPIK) show a composition bias toward pro residues. Fibronectin type-III domains lie at 1989–2089 (RLGE…SMEA), 2097–2185 (LLGE…APEE), 2196–2296 (RLGQ…TEPP), 2305–2398 (RLEE…TPSP), and 2408–2502 (PPEE…PQED). Residues 2281 to 2304 (APGKDEEMAPASTEPPTPEPPIKP) form a disordered region. The disordered stretch occupies residues 2495–2542 (GVTAPQEDVDETPSPTEPGTEAPGPPEEPLLGELTVTGSSPDSLSLSW). Positions 2506 to 2516 (TPSPTEPGTEA) are enriched in low complexity. 15 consecutive Fibronectin type-III domains span residues 2519–2617 (PPEE…TTQA), 2625–2723 (PPIK…TPSP), 2733–2840 (PPEE…TTPE), 2841–2939 (PPNK…TPAP), 2949–3042 (PPEE…APKD), 3062–3153 (RLGE…TPSP), 3168–3260 (LLGE…TPLP), 3264–3355 (RLGE…TKPS), 3357–3446 (RLGE…PLEK), 3451–3544 (HLGE…TPAP), 3553–3647 (PPEE…LAPA), 3657–3754 (RLSQ…TLSP), 3758–3847 (SPRD…VPDG), 3848–3934 (PTQL…TGLE), and 3935–4025 (APRD…LRIP). The span at 2530–2542 (VTGSSPDSLSLSW) shows a compositional bias: polar residues. Disordered regions lie at residues 2824-2847 (PEDEAETTQAVPTTTPEPPNKPRL) and 2933-2969 (EEETPAPTEPSTEAPEPPEEPLLGELTVTGSSPDSLS). The segment covering 2937–2946 (PAPTEPSTEA) has biased composition (low complexity). Over residues 2960 to 2969 (VTGSSPDSLS) the composition is skewed to polar residues. Disordered regions lie at residues 3536-3559 (APEEDTPAPELAPEAPEPPEEPRL) and 3636-3662 (LSAEGTTGLAPAGQTSEESRPRLSQLS). N-linked (GlcNAc...) asparagine glycosylation is found at asparagine 3855, asparagine 3908, and asparagine 3920. In terms of domain architecture, Fibrinogen C-terminal spans 4021–4236 (GLRIPFPRDC…FTEMKLRPRN (216 aa)). A disulfide bridge connects residues cysteine 4030 and cysteine 4060. An N-linked (GlcNAc...) asparagine glycan is attached at asparagine 4095. Cysteine 4182 and cysteine 4195 are joined by a disulfide.

Belongs to the tenascin family. Homotrimer. Interacts with type I, III and V collagens and tropoelastin via its 29th fibronectin type-III domain. In terms of tissue distribution, highly expressed in fetal adrenal, in fetal testis, fetal smooth, striated and cardiac muscle. Isoform XB-short is only expressed in the adrenal gland.

It localises to the secreted. Its subcellular location is the extracellular space. The protein resides in the extracellular matrix. Appears to mediate interactions between cells and the extracellular matrix. Substrate-adhesion molecule that appears to inhibit cell migration. Accelerates collagen fibril formation. May play a role in supporting the growth of epithelial tumors. The protein is Tenascin-X of Homo sapiens (Human).